The following is a 311-amino-acid chain: 4-hydroxy-tetrahydrodipicolinate synthase (311 aa).

Thr51 is a pyruvate binding site. The Proton donor/acceptor role is filled by Tyr140. The active-site Schiff-base intermediate with substrate is Lys168. Ile209 provides a ligand contact to pyruvate.

It belongs to the DapA family. As to quaternary structure, homotetramer; dimer of dimers.

It localises to the cytoplasm. The enzyme catalyses L-aspartate 4-semialdehyde + pyruvate = (2S,4S)-4-hydroxy-2,3,4,5-tetrahydrodipicolinate + H2O + H(+). Its pathway is amino-acid biosynthesis; L-lysine biosynthesis via DAP pathway; (S)-tetrahydrodipicolinate from L-aspartate: step 3/4. Catalyzes the condensation of (S)-aspartate-beta-semialdehyde [(S)-ASA] and pyruvate to 4-hydroxy-tetrahydrodipicolinate (HTPA). This Streptococcus pneumoniae (strain ATCC 700669 / Spain 23F-1) protein is 4-hydroxy-tetrahydrodipicolinate synthase.